The following is a 1213-amino-acid chain: Hybrid signal transduction histidine kinase K (1213 aa).

Disordered regions lie at residues 1–37 (MIELNNHSKINKNENNTNTRNNSSNNNNNNNNINKTN), 98–189 (NNNY…SSSS), 279–392 (NKNV…IPFR), and 495–565 (TTEQ…NYNN). Composition is skewed to low complexity over residues 98 to 162 (NNNY…QKDQ), 171 to 189 (SLSSSSSSSSLSSSSSSSS), 279 to 331 (NKNV…NSGA), 339 to 371 (NNNNNNNNNNNNNNNNNNNSNSNSNNNSKSNNN), 498 to 511 (QQQQLQQQQQQQQQ), and 522 to 565 (QRQQ…NYNN). The next 6 membrane-spanning stretches (helical) occupy residues 600-618 (IIFNSFNFICSIVLDGSNI), 628-648 (LIIGFCFTILSFIPSWIIFFW), 652-672 (INKPAVMAIIAMPMSISSLVI), 676-696 (TGSIHYPCHILCFTLCFALTI), 729-749 (IQWSLMVLSIYLLFFVANLYG), and 768-788 (IIDVTIIIMTLIFTLCYQYFI). Residues 822 to 1052 (TMSHEIRTPL…TFWFILPLEE (231 aa)) form the Histidine kinase domain. His825 is modified (phosphohistidine; by autocatalysis). Residues 1076-1199 (KVLIAEDNII…QLRSAIEMAI (124 aa)) enclose the Response regulatory domain. Position 1125 is a 4-aspartylphosphate (Asp1125).

Post-translationally, activation probably requires transfer of a phosphate group between a histidine in the kinase core (transmitter) domain and an aspartate of the receiver domain.

It is found in the nucleus membrane. It carries out the reaction ATP + protein L-histidine = ADP + protein N-phospho-L-histidine.. Functionally, involved in a signal transduction pathway that regulates morphogenesis and controls entry into the culmination stage. May act via the regA pathway, being activated by a morphogenesis-stimulated ligand, reducing phosphodiesterase regA levels and allowing cAMP level to rise to promote the culmination stage. This protein probably undergoes an ATP-dependent autophosphorylation at a conserved histidine residue in the kinase core, and a phosphoryl group is then transferred to a conserved aspartate residue in the receiver domain. This is Hybrid signal transduction histidine kinase K (dhkK) from Dictyostelium discoideum (Social amoeba).